Consider the following 83-residue polypeptide: FMRFamide-like neuropeptide 23 (83 aa).

The N-terminal stretch at 1-24 is a signal peptide; sequence MLLPKISILLYILVVLQETAAVRG. Residues 25 to 36 constitute a propeptide that is removed on maturation; that stretch reads ALFRSGRAVPFE. F47 carries the post-translational modification Phenylalanine amide. The propeptide occupies 50–83; it reads AGMASGVGGGSEGGPDDVKNSYIRVNGEPEIVYQ.

This sequence belongs to the FARP (FMRFamide related peptide) family. In terms of tissue distribution, each flp gene is expressed in a distinct set of neurons.

Its subcellular location is the secreted. FMRFamides and FMRFamide-like peptides are neuropeptides. This Caenorhabditis elegans protein is FMRFamide-like neuropeptide 23 (flp-23).